The primary structure comprises 120 residues: ATP-dependent Clp protease adapter protein ClpS (120 aa).

Residues 9–32 (LTFNQDHPAEHEDDSSGIAVQESK) form a disordered region.

This sequence belongs to the ClpS family. In terms of assembly, binds to the N-terminal domain of the chaperone ClpA.

In terms of biological role, involved in the modulation of the specificity of the ClpAP-mediated ATP-dependent protein degradation. This is ATP-dependent Clp protease adapter protein ClpS from Ectopseudomonas mendocina (strain ymp) (Pseudomonas mendocina).